The chain runs to 278 residues: 3-methyl-2-oxobutanoate hydroxymethyltransferase (278 aa).

Residues D43 and D82 each coordinate Mg(2+). Residues 43–44, D82, and K112 contribute to the 3-methyl-2-oxobutanoate site; that span reads DS. Residue E114 coordinates Mg(2+). The active-site Proton acceptor is E181.

This sequence belongs to the PanB family. As to quaternary structure, homodecamer; pentamer of dimers. Mg(2+) serves as cofactor.

It localises to the cytoplasm. The enzyme catalyses 3-methyl-2-oxobutanoate + (6R)-5,10-methylene-5,6,7,8-tetrahydrofolate + H2O = 2-dehydropantoate + (6S)-5,6,7,8-tetrahydrofolate. It participates in cofactor biosynthesis; (R)-pantothenate biosynthesis; (R)-pantoate from 3-methyl-2-oxobutanoate: step 1/2. Functionally, catalyzes the reversible reaction in which hydroxymethyl group from 5,10-methylenetetrahydrofolate is transferred onto alpha-ketoisovalerate to form ketopantoate. The sequence is that of 3-methyl-2-oxobutanoate hydroxymethyltransferase from Bacillus cereus (strain ATCC 10987 / NRS 248).